Consider the following 314-residue polypeptide: Large ribosomal subunit protein uL10 (314 aa).

The tract at residues 281 to 314 (GSTQETPEEKKEEAKKEEKSPDESISEGLGALFQ) is disordered. Positions 287 to 302 (PEEKKEEAKKEEKSPD) are enriched in basic and acidic residues.

It belongs to the universal ribosomal protein uL10 family. As to quaternary structure, part of the 50S ribosomal subunit. Forms part of the ribosomal stalk which helps the ribosome interact with GTP-bound translation factors. Forms a heptameric L10(L12)2(L12)2(L12)2 complex, where L10 forms an elongated spine to which the L12 dimers bind in a sequential fashion.

In terms of biological role, forms part of the ribosomal stalk, playing a central role in the interaction of the ribosome with GTP-bound translation factors. This chain is Large ribosomal subunit protein uL10, found in Thermoplasma acidophilum (strain ATCC 25905 / DSM 1728 / JCM 9062 / NBRC 15155 / AMRC-C165).